The primary structure comprises 115 residues: Large ribosomal subunit protein bL19 (115 aa).

Belongs to the bacterial ribosomal protein bL19 family.

This protein is located at the 30S-50S ribosomal subunit interface and may play a role in the structure and function of the aminoacyl-tRNA binding site. The polypeptide is Large ribosomal subunit protein bL19 (Clostridium perfringens (strain ATCC 13124 / DSM 756 / JCM 1290 / NCIMB 6125 / NCTC 8237 / Type A)).